Here is a 417-residue protein sequence, read N- to C-terminus: Methyltransferase/ribosomally synthesized cyclic peptide lentinulin A precursor ledMA (417 aa).

The tract at residues 1–251 (METPTLNKSG…GVSTFYIPPK (251 aa)) is methyltransferase domain. Active-site residues include Arg-72, Tyr-76, and Tyr-98. The S-adenosyl-L-methionine site is built by Tyr-98, His-100, Val-103, Ala-130, Gln-172, Ala-213, Ser-244, and Thr-245. The interval 252–378 (ERKEINVDII…WAFRCAMKEM (127 aa)) is clasp domain. The interval 379–399 (PISLLDNAKQSMEEASEQGFP) is precursor leader. An N-methylisoleucine modification is found at Ile-401. N-methylvaline occurs at positions 403 and 404. The residue at position 405 (Gly-405) is an N-methylglycine. N-methylvaline is present on residues Val-406 and Val-407. Gly-408 carries the post-translational modification N-methylglycine. Position 410 is an N-methylvaline (Val-410). Gly-411 is subject to N-methylglycine. N-methylvaline is present on Val-413.

This sequence in the N-terminal section; belongs to the precorrin methyltransferase family. In terms of assembly, homodimer. In terms of processing, ledMA automethylates at Ile-401, Val-403, Val-404, Gly-405, Val-406, Val-407, Gly-408, Val-410, Gly-411 and Val-413 before being processed by the prolyloligopeptidase ledP which likely forms a peptidyl ester upon removal of the follower propeptide, which then undergoes macrocyclization with the N-terminus of the modified core peptide. Peptide backbone alpha-N-methylations change the physicochemical properties of amide bonds to provide structural constraints and other favorable characteristics including biological membrane permeability to peptides.

The protein operates within mycotoxin biosynthesis. Its function is as follows. Fusion protein of the methyltransferase ledM and the lentinulin A core peptide; part of the gene cluster that mediates the biosynthesis of lentinulin A, a highly methylated cyclic dodecapeptide with nematodicidal activity. Lentinulin A derives from the C-terminus of the ledMA protein, and it is the ledMA protein that methylates its own C-terminus using S-adenosyl methionine (SAM). The C-terminus is subsequently cleaved off and macrocyclized by the prolyloligopeptidase ledP to give the final product. In Lentinula edodes (Shiitake mushroom), this protein is Methyltransferase/ribosomally synthesized cyclic peptide lentinulin A precursor ledMA.